We begin with the raw amino-acid sequence, 853 residues long: MEEDDNLKKGNERNKKKAIFSNDDFTGEDSLMEDHLELREKLSEDIDMIKTSLKNNLVCSTLNDNEILTLSNYMQFFVFKSGNLVIKQGEKGSYFFIINSGKFDVYVNDKKVKTMGKGSSFGEAALIHNTQRSATIIAETDGTLWGVQRSTFRATLKQLSNRNFNENRTFIDSVSVFDMLTEAQKNMITNACVIQNFKSGETIVKQGDYGDVLYILKEGKATVYINDEEIRVLEKGSYFGERALLYDEPRSATIIAKEPTACASICRKLLNIVLGNLQVVLFRNIMTEALQQSEIFKQFSGDQLNDLADTAIVRDYPANYNILHKDKVKSVKYIIVLEGKVELFLDDTSIGILSRGMSFGDQYVLNQKQPFKHTIKSLEVCKIALITETCLADCLGNNNIDASIDYNNKKSIIKKMYIFRYLTDKQCNLLIEAFRTTRYEEGDYIIQEGEVGSRFYIIKNGEVEIVKNKKRLRTLGKNDYFGERALLYDEPRTASVISKVNNVECWFVDKSVFLQIIQGPMLAHLEERIKMQDTKVEMDELETERIIGRGTFGTVKLVHHKPTKIRYALKCVSKRSIINLNQQNNIKLEREITAENDHPFIIRLVRTFKDSKYFYFLTELVTGGELYDAIRKLGLLSKSQAQFYLGSIILAIEYLHERNIVYRDLKPENILLDKQGYVKLIDFGCAKKVQGRAYTLVGTPHYMAPEVILGKGYGCTVDIWALGICLYEFICGPLPFGNDEEDQLEIFRDILTGQLTFPDYVTDTDSINLMKRLLCRLPQGRIGCSINGFKDIKDHPFFSNFNWDKLAGRLLDPPLVSKSETYAEDIDIKQIEEEDAEDDEEPLNDEDNWDIDF.

Positions 1–29 (MEEDDNLKKGNERNKKKAIFSNDDFTGED) are autoinhibitory segment. 4 cNMP-binding domain regions span residues 58-173 (VCST…FIDS), 176-275 (VFDM…IVLG), 295-398 (IFKQ…LGNN), and 418-517 (IFRY…LQII). Lys-113, Gly-122, Glu-123, Ala-125, Arg-132, and Ser-133 together coordinate 3',5'-cyclic GMP. The 3',5'-cyclic GMP site is built by Arg-473, Gly-482, Glu-483, Ala-485, Arg-492, and Thr-493. The Protein kinase domain maps to 541 to 798 (LETERIIGRG…FKDIKDHPFF (258 aa)). ATP is bound by residues 547–555 (IGRGTFGTV) and Lys-570. Asp-664 acts as the Proton acceptor in catalysis. The 55-residue stretch at 799–853 (SNFNWDKLAGRLLDPPLVSKSETYAEDIDIKQIEEEDAEDDEEPLNDEDNWDIDF) folds into the AGC-kinase C-terminal domain. Positions 827–853 (DIKQIEEEDAEDDEEPLNDEDNWDIDF) are disordered. The span at 832-853 (EEEDAEDDEEPLNDEDNWDIDF) shows a compositional bias: acidic residues.

The protein belongs to the protein kinase superfamily. AGC Ser/Thr protein kinase family. cGMP subfamily. Monomer. Mg(2+) is required as a cofactor. In terms of processing, autophosphorylated.

The protein resides in the cytoplasm. It localises to the endoplasmic reticulum membrane. It carries out the reaction L-seryl-[protein] + ATP = O-phospho-L-seryl-[protein] + ADP + H(+). The catalysed reaction is L-threonyl-[protein] + ATP = O-phospho-L-threonyl-[protein] + ADP + H(+). With respect to regulation, activated by cGMP. Not activated by cAMP. cGMP binding allosterically triggers a conformational change at the alpha C-helix of cGMP-binding domain 4, which bridges the regulatory and catalytic domains, causing the capping triad, composed of Arg-484, Gln-532 and Asp-533, to form and stabilize the active conformation. The cGMP-binding domains acts cooperatively to activate PKG. Its function is as follows. Serine/threonine protein kinase which acts as a downstream effector of the second messenger cGMP. Controls the release of Ca(2+) from intracellular stores by regulating phosphoinositide biosynthesis. Ca(2+) signals are essential for merozoite and sporozoite invasion and egress from host hepatocytes and erythrocytes, and, in the mosquito vector, for gametocyte activation, and ookinete and sporozoite motility. During the host liver stage, regulates the initial invasion of host hepatocytes by sporozoites by regulating sporozoite motility and microneme exocytosis. Following parasite development in the hepatocytes, required for the release of merosomes, a vesicle containing the mature merozoites. During the asexual blood stage, required for the progression from schizont to the ring stage following merozoite invasion of host erythrocytes and for merozoite egress. Regulates merozoite egress by promoting the release of exonemes and micronemes which contain proteins essential for egress. Phosphorylates CDPK1 predominantly at the late schizont stage; phosphorylation at 'Ser-64' regulates CDPK1 protein-protein interaction and phosphorylation at 'Thr-231' may regulate CDPK1 kinase activity. In the mosquito vector, required for the initiation of gametogenesis induced by xanthurenic acid, specifically the gametocyte differentiation from the crescent-shaped form to the spherical form. Required for the gliding motility of ookinetes to reach and penetrate the midgut epithelium by promoting Ca(2+)-mediated activation of CDPK1 and CDPK4. Also required for microneme secretion in ookinete by promoting Ca(2+)-mediated activation of CDPK3. The protein is cGMP-dependent protein kinase of Plasmodium falciparum (isolate NF54).